The sequence spans 650 residues: Chaperone protein DnaK (650 aa).

Position 200 is a phosphothreonine; by autocatalysis (Thr200).

Belongs to the heat shock protein 70 family.

In terms of biological role, acts as a chaperone. The sequence is that of Chaperone protein DnaK from Paraburkholderia phytofirmans (strain DSM 17436 / LMG 22146 / PsJN) (Burkholderia phytofirmans).